The chain runs to 610 residues: DNA mismatch repair protein MutL (610 aa).

The protein belongs to the DNA mismatch repair MutL/HexB family.

In terms of biological role, this protein is involved in the repair of mismatches in DNA. It is required for dam-dependent methyl-directed DNA mismatch repair. May act as a 'molecular matchmaker', a protein that promotes the formation of a stable complex between two or more DNA-binding proteins in an ATP-dependent manner without itself being part of a final effector complex. This is DNA mismatch repair protein MutL from Rickettsia conorii (strain ATCC VR-613 / Malish 7).